The sequence spans 469 residues: UDP-N-acetylmuramoylalanine--D-glutamate ligase (469 aa).

Position 121 to 127 (Gly121 to Thr127) interacts with ATP.

It belongs to the MurCDEF family.

It is found in the cytoplasm. The catalysed reaction is UDP-N-acetyl-alpha-D-muramoyl-L-alanine + D-glutamate + ATP = UDP-N-acetyl-alpha-D-muramoyl-L-alanyl-D-glutamate + ADP + phosphate + H(+). It participates in cell wall biogenesis; peptidoglycan biosynthesis. Functionally, cell wall formation. Catalyzes the addition of glutamate to the nucleotide precursor UDP-N-acetylmuramoyl-L-alanine (UMA). In Rhodopseudomonas palustris (strain ATCC BAA-98 / CGA009), this protein is UDP-N-acetylmuramoylalanine--D-glutamate ligase.